The sequence spans 1364 residues: Toxin subunit YenA2 (1364 aa).

A coiled-coil region spans residues 1025 to 1080 (SESYRRRRQEWELQYKQAEWEVNSVEQQINLQNMQIKAANKRLEQVEAQQQQAMAL).

Semipurified toxin complex consists of at least YenA1-YenA2-YenB-YenC1-YenC2-Chi1-Chi2. The Yen-TC:K9 subcomplex is about 26 nm tall and 22 nm in diameter with 5-fold symmetry and 5 copies of YenA1, YenA2, Chi1 and Chi2; the chitinase subunits may be solvent accessible on the exterior the complex. The Yen-TC:K9 subcomplex has no insecticidal activity. The native complex with additional YenB, YenC1 and YenC2 subunits is 16 nm taller and is insecticidal; the toxicity-conferring subunits are present at about 1 copy each. Post-translationally, the isolated toxin complex includes 3 peptides starting between residues 768 and 778 of this protein, which might be physiologically relevant.

The protein resides in the secreted. Its function is as follows. Part of an orally active toxin complex (TC) with strong insecticidal effects on larvae of the Coleoptera Costelytra zealandica, Acrossidius tasmania and Adoryphorus couloni and some Lepidoptera larvae. The TC has an endochitinase activity. In Yersinia entomophaga, this protein is Toxin subunit YenA2.